A 311-amino-acid polypeptide reads, in one-letter code: Haloalkane dehalogenase (311 aa).

The 119-residue stretch at 30 to 148 (AIVFQHGNPS…WDDFPDEVAQ (119 aa)) folds into the AB hydrolase-1 domain. D107 acts as the Nucleophile in catalysis. The active-site Proton donor is the E131. Residue H272 is the Proton acceptor of the active site.

It belongs to the haloalkane dehalogenase family. Type 2 subfamily. As to quaternary structure, monomer.

It catalyses the reaction 1-haloalkane + H2O = a halide anion + a primary alcohol + H(+). Its function is as follows. Catalyzes hydrolytic cleavage of carbon-halogen bonds in halogenated aliphatic compounds, leading to the formation of the corresponding primary alcohols, halide ions and protons. The sequence is that of Haloalkane dehalogenase from Mycolicibacterium smegmatis (strain ATCC 700084 / mc(2)155) (Mycobacterium smegmatis).